Here is a 25-residue protein sequence, read N- to C-terminus: Putative cytochrome c4 (25 aa).

Positions 1–25 are disordered; that stretch reads QEDIEAGKQKSATCTACHGQEGNST. 2 residues coordinate heme: cysteine 14 and cysteine 17.

Binds 2 heme groups per subunit.

The protein localises to the periplasm. Functionally, diheme, high potential cytochrome c believed to be an intermediate electron donor to terminal oxidation systems. The protein is Putative cytochrome c4 of Aliivibrio fischeri (Vibrio fischeri).